A 443-amino-acid chain; its full sequence is Regulator of sigma E protease (443 aa).

His-21 contributes to the Zn(2+) binding site. Glu-22 is a catalytic residue. Residue His-25 coordinates Zn(2+). Residues 98–118 form a helical membrane-spanning segment; that stretch reads FVIIAGPLANFIFAIFAYWVI. 2 consecutive PDZ domains span residues 106 to 185 and 198 to 287; these read ANFI…SPFN and NWTF…TPVR. The next 2 helical transmembrane spans lie at 369–389 and 423–443; these read LVYF…MNLF and IGAA…FLRL.

The protein belongs to the peptidase M50B family. Interacts with RseA. The cofactor is Zn(2+).

The protein resides in the cell inner membrane. Functionally, a site-2 regulated intramembrane protease (S2P) that cleaves a peptide bond in the transmembrane region of RseA. Part of a regulated intramembrane proteolysis (RIP) cascade. Acts on DegS-cleaved RseA to release the cytoplasmic domain of RseA. This provides the cell with sigma-E (RpoE) activity through the proteolysis of RseA. The protein is Regulator of sigma E protease (rsep) of Haemophilus influenzae (strain ATCC 51907 / DSM 11121 / KW20 / Rd).